The primary structure comprises 419 residues: Tyrosine--tRNA ligase (419 aa).

Tyrosine 34 provides a ligand contact to L-tyrosine. Positions 39 to 48 (PSGDSMHIGH) match the 'HIGH' region motif. Tyrosine 168 and glutamine 172 together coordinate L-tyrosine. The short motif at 230-234 (KFGKS) is the 'KMSKS' region element. Residue lysine 233 coordinates ATP. An S4 RNA-binding domain is found at 352–418 (ANLVDWLVTL…GKKKYFLVSY (67 aa)).

Belongs to the class-I aminoacyl-tRNA synthetase family. TyrS type 1 subfamily. In terms of assembly, homodimer.

Its subcellular location is the cytoplasm. It carries out the reaction tRNA(Tyr) + L-tyrosine + ATP = L-tyrosyl-tRNA(Tyr) + AMP + diphosphate + H(+). Functionally, catalyzes the attachment of tyrosine to tRNA(Tyr) in a two-step reaction: tyrosine is first activated by ATP to form Tyr-AMP and then transferred to the acceptor end of tRNA(Tyr). The protein is Tyrosine--tRNA ligase of Listeria monocytogenes serotype 4b (strain F2365).